We begin with the raw amino-acid sequence, 1735 residues long: Glutamine and serine-rich protein 1 (1735 aa).

An N-acetylmethionine modification is found at methionine 1. Polar residues predominate over residues alanine 267–proline 297. 4 disordered regions span residues alanine 267–isoleucine 301, threonine 414–threonine 440, serine 479–alanine 518, and leucine 533–glutamate 561. Residues leucine 417–threonine 440 show a composition bias toward low complexity. Serine 586, serine 615, and serine 886 each carry phosphoserine. Threonine 949 bears the Phosphothreonine mark. A disordered region spans residues glycine 964–glycine 1033. The segment covering glutamate 971–leucine 985 has biased composition (polar residues). The residue at position 987 (serine 987) is a Phosphoserine. A compositionally biased stretch (polar residues) spans serine 997–glutamate 1024. Glycyl lysine isopeptide (Lys-Gly) (interchain with G-Cter in SUMO2) cross-links involve residues lysine 1058 and lysine 1083. 2 disordered regions span residues lysine 1073 to arginine 1132 and arginine 1178 to aspartate 1217. Over residues serine 1120–arginine 1132 the composition is skewed to basic and acidic residues. Phosphoserine occurs at positions 1211, 1230, 1231, and 1239. Residues threonine 1256–threonine 1286 are disordered. Over residues alanine 1269–threonine 1286 the composition is skewed to low complexity. The residue at position 1341 (threonine 1341) is a Phosphothreonine. The residue at position 1348 (serine 1348) is a Phosphoserine. The interval valine 1441–proline 1532 is disordered. Positions lysine 1449 to threonine 1478 are enriched in polar residues. Basic and acidic residues predominate over residues valine 1492–phenylalanine 1508.

In terms of assembly, interacts with TET1.

The protein resides in the chromosome. In terms of biological role, plays an essential role in the protection and maintenance of transcriptional and developmental programs. Protects many bivalent promoters and poised enhancers from hypermethylation, showing a marked preference for these regulatory elements over other types of promoters or enhancers. Mechanistically, cooperates with TET1 and binds to DNA in a common complex to inhibit the binding of DNMT3A/3B and therefore de novo methylation. The sequence is that of Glutamine and serine-rich protein 1 (QSER1) from Homo sapiens (Human).